The sequence spans 156 residues: Small ribosomal subunit protein uS7 (156 aa).

It belongs to the universal ribosomal protein uS7 family. Part of the 30S ribosomal subunit. Contacts proteins S9 and S11.

Its function is as follows. One of the primary rRNA binding proteins, it binds directly to 16S rRNA where it nucleates assembly of the head domain of the 30S subunit. Is located at the subunit interface close to the decoding center, probably blocks exit of the E-site tRNA. The protein is Small ribosomal subunit protein uS7 of Azorhizobium caulinodans (strain ATCC 43989 / DSM 5975 / JCM 20966 / LMG 6465 / NBRC 14845 / NCIMB 13405 / ORS 571).